The following is an 89-amino-acid chain: Small ribosomal subunit protein uS15 (89 aa).

This sequence belongs to the universal ribosomal protein uS15 family. As to quaternary structure, part of the 30S ribosomal subunit. Forms a bridge to the 50S subunit in the 70S ribosome, contacting the 23S rRNA.

One of the primary rRNA binding proteins, it binds directly to 16S rRNA where it helps nucleate assembly of the platform of the 30S subunit by binding and bridging several RNA helices of the 16S rRNA. Its function is as follows. Forms an intersubunit bridge (bridge B4) with the 23S rRNA of the 50S subunit in the ribosome. This is Small ribosomal subunit protein uS15 from Hamiltonella defensa subsp. Acyrthosiphon pisum (strain 5AT).